The sequence spans 1067 residues: Carbamoyl phosphate synthase large chain (1067 aa).

The tract at residues 1–401 (MPLNKDIKKV…AFLKGIRSLE (401 aa)) is carboxyphosphate synthetic domain. Residues Arg129, Arg169, Gly175, Gly176, Lys208, Val210, Glu215, Gly241, Ile242, His243, Gln284, and Glu298 each contribute to the ATP site. The region spanning 133-327 (RDMMNRINQP…IAKVAAKIAL (195 aa)) is the ATP-grasp 1 domain. Residues Gln284, Glu298, and Asn300 each contribute to the Mg(2+) site. Mn(2+) contacts are provided by Gln284, Glu298, and Asn300. The segment at 402 to 549 (IGKYSLEHKK…YSTYEQYDEV (148 aa)) is oligomerization domain. The segment at 550 to 932 (VVSDNKKVVV…ALYKGFVGAS (383 aa)) is carbamoyl phosphate synthetic domain. The region spanning 674 to 864 (DDLLERLNIA…IVDIATRIML (191 aa)) is the ATP-grasp 2 domain. ATP-binding residues include Arg710, Lys749, Leu751, Glu755, Gly780, Val781, His782, Ser783, Gln823, and Glu835. Residues Gln823, Glu835, and Asn837 each contribute to the Mg(2+) site. Residues Gln823, Glu835, and Asn837 each contribute to the Mn(2+) site. An MGS-like domain is found at 933–1067 (MYTGDKGKTI…NRELEVFNLI (135 aa)). The tract at residues 933 to 1067 (MYTGDKGKTI…NRELEVFNLI (135 aa)) is allosteric domain.

Belongs to the CarB family. In terms of assembly, composed of two chains; the small (or glutamine) chain promotes the hydrolysis of glutamine to ammonia, which is used by the large (or ammonia) chain to synthesize carbamoyl phosphate. Tetramer of heterodimers (alpha,beta)4. Mg(2+) serves as cofactor. The cofactor is Mn(2+).

It catalyses the reaction hydrogencarbonate + L-glutamine + 2 ATP + H2O = carbamoyl phosphate + L-glutamate + 2 ADP + phosphate + 2 H(+). It carries out the reaction hydrogencarbonate + NH4(+) + 2 ATP = carbamoyl phosphate + 2 ADP + phosphate + 2 H(+). It functions in the pathway amino-acid biosynthesis; L-arginine biosynthesis; carbamoyl phosphate from bicarbonate: step 1/1. The protein operates within pyrimidine metabolism; UMP biosynthesis via de novo pathway; (S)-dihydroorotate from bicarbonate: step 1/3. Its function is as follows. Large subunit of the glutamine-dependent carbamoyl phosphate synthetase (CPSase). CPSase catalyzes the formation of carbamoyl phosphate from the ammonia moiety of glutamine, carbonate, and phosphate donated by ATP, constituting the first step of 2 biosynthetic pathways, one leading to arginine and/or urea and the other to pyrimidine nucleotides. The large subunit (synthetase) binds the substrates ammonia (free or transferred from glutamine from the small subunit), hydrogencarbonate and ATP and carries out an ATP-coupled ligase reaction, activating hydrogencarbonate by forming carboxy phosphate which reacts with ammonia to form carbamoyl phosphate. This chain is Carbamoyl phosphate synthase large chain, found in Clostridium perfringens (strain SM101 / Type A).